The chain runs to 334 residues: Holliday junction branch migration complex subunit RuvB (334 aa).

Residues 1–181 form a large ATPase domain (RuvB-L) region; that stretch reads MHDRLISGTE…FGIVQRLEFY (181 aa). Residues Ile20, Arg21, Gly62, Lys65, Thr66, Thr67, 128-130, Arg171, Tyr181, and Arg218 each bind ATP; that span reads EDY. Thr66 is a binding site for Mg(2+). The segment at 182–252 is small ATPAse domain (RuvB-S); that stretch reads SVEDLTHIVT…MAQRALDMLN (71 aa). The segment at 255–334 is head domain (RuvB-H); that stretch reads KDGLDTLDRR…FGLTPPEPKN (80 aa). The DNA site is built by Arg310 and Arg315.

It belongs to the RuvB family. Homohexamer. Forms an RuvA(8)-RuvB(12)-Holliday junction (HJ) complex. HJ DNA is sandwiched between 2 RuvA tetramers; dsDNA enters through RuvA and exits via RuvB. An RuvB hexamer assembles on each DNA strand where it exits the tetramer. Each RuvB hexamer is contacted by two RuvA subunits (via domain III) on 2 adjacent RuvB subunits; this complex drives branch migration. In the full resolvosome a probable DNA-RuvA(4)-RuvB(12)-RuvC(2) complex forms which resolves the HJ.

It is found in the cytoplasm. It catalyses the reaction ATP + H2O = ADP + phosphate + H(+). The RuvA-RuvB-RuvC complex processes Holliday junction (HJ) DNA during genetic recombination and DNA repair, while the RuvA-RuvB complex plays an important role in the rescue of blocked DNA replication forks via replication fork reversal (RFR). RuvA specifically binds to HJ cruciform DNA, conferring on it an open structure. The RuvB hexamer acts as an ATP-dependent pump, pulling dsDNA into and through the RuvAB complex. RuvB forms 2 homohexamers on either side of HJ DNA bound by 1 or 2 RuvA tetramers; 4 subunits per hexamer contact DNA at a time. Coordinated motions by a converter formed by DNA-disengaged RuvB subunits stimulates ATP hydrolysis and nucleotide exchange. Immobilization of the converter enables RuvB to convert the ATP-contained energy into a lever motion, pulling 2 nucleotides of DNA out of the RuvA tetramer per ATP hydrolyzed, thus driving DNA branch migration. The RuvB motors rotate together with the DNA substrate, which together with the progressing nucleotide cycle form the mechanistic basis for DNA recombination by continuous HJ branch migration. Branch migration allows RuvC to scan DNA until it finds its consensus sequence, where it cleaves and resolves cruciform DNA. This Acinetobacter baylyi (strain ATCC 33305 / BD413 / ADP1) protein is Holliday junction branch migration complex subunit RuvB.